A 747-amino-acid polypeptide reads, in one-letter code: Plakophilin-1 (747 aa).

A required for binding to single stranded DNA region spans residues 1–234; that stretch reads MNHSPLKTAL…SFGHSRASSK (234 aa). The interval 1-286 is required for interaction with EIF4A1; it reads MNHSPLKTAL…ESAKQQVYQL (286 aa). A Phosphoserine modification is found at Ser4. Residues 48–68 are disordered; it reads TVKRQKSKSSQSSTLSHSNRG. 2 phosphorylation in this region is required for cytoplasmic localization and protein stabilization regions span residues 54 to 69 and 116 to 191; these read SKSSQSSTLSHSNRGS and RFSS…STCS. Phosphoserine; by PKB/AKT2 is present on Ser118. Residues Ser119, Ser121, and Ser142 each carry the phosphoserine modification. Positions 160–269 are required for WNT-mediated nuclear localization; the sequence is YCDPRGTLRK…KYQAIGAYYI (110 aa). ARM repeat units follow at residues 243-274, 275-316, 317-359, 360-415, 416-463, 525-556, 557-603, 604-649, and 650-713; these read SGLTIPKAVQYLSSQDEKYQAIGAYYIQHTCF, QDES…NLVF, RSTT…NLSS, TDEL…KRLG, MREL…NCVA, NYDCPLPEEETNPKGSGWLYHSDAIRTYLNLM, GKSK…IARL, LQSG…SHTG, and NTSN…DMWS.

Belongs to the beta-catenin family. In terms of assembly, part of a complex that contains DSG3, PKP1, YAP1 and YWHAG; the complex is required for localization of DSG3 and YAP1 to the cell membrane in keratinocytes. Interacts with DSP. Interacts (via N-terminus) with KRT5/CK5, KRT8/CK8 (via rod domain), KRT15/CK15 and KRT18/CK18 (via rod domain) as part of intermediate filaments. Interacts with VIM (via rod domain). Interacts with DSP. Interacts with DES. Interacts with FXR1; the interaction may facilitate the binding of PKP1 to PKP2, PKP3 and DSP mRNA. Interacts (via N-terminus) with EIF4A1; the interaction promotes EIF4A1 recruitment to the cap-dependent translation complex and EIF4A1 ATPase activity. Interacts with TJP1/ZO-1; the interaction facilitates TJP1/ZO-1 localization to the plasma membrane. Interacts (when phosphorylated) with YWHAG; the interaction results in translocation of PKP1 to the cytoplasm and loss of intercellular adhesion in keratinocytes. In terms of processing, phosphorylated by AKT2; required for interaction with YWHAG and subsequent localization away from desmosomes to the cytoplasm. Phosphorylation of Ser-118 by AKT2 promotes PKP1-driven cap-dependent mRNA translation and decreases intercellular adhesion, phosphorylation is promoted by insulin. Phosphorylation by RIPK4 at the N-terminus is required for its role in differentiation of keratinocytes and DSG1 localization at cell junctions. In terms of tissue distribution, expressed in stratified squamous, complex, glandular duct and bladder epithelia (at protein level). As to expression, widely expressed (at protein level).

Its subcellular location is the cell junction. It is found in the desmosome. The protein localises to the nucleus. It localises to the cytoplasm. The protein resides in the perinuclear region. Its subcellular location is the cell membrane. It is found in the stress granule. A component of desmosome cell-cell junctions which are required for positive regulation of cellular adhesion. Plays a role in desmosome protein expression regulation and localization to the desmosomal plaque, thereby maintaining cell sheet integrity and anchorage of desmosomes to intermediate filaments. Required for localization of DSG3 and YAP1 to the cell membrane in keratinocytes in response to mechanical strain, via the formation of an interaction complex composed of DSG3, YAP1, PKP1 and YWHAG. Positively regulates differentiation of keratinocytes, potentially via promoting localization of DSG1 at desmosome cell junctions. Required for calcium-independent development and maturation of desmosome plaques specifically at lateral cell-cell contacts in differentiating keratinocytes. Plays a role in the maintenance of DSG3 protein abundance, DSG3 clustering and localization of these clusters to the cell membrane in keratinocytes. May also promote keratinocyte proliferation and morphogenesis during postnatal development. Required for tight junction inside-out transepidermal barrier function of the skin. Promotes Wnt-mediated proliferation and differentiation of ameloblasts, via facilitating TJP1/ZO-1 localization to tight junctions. Binds single-stranded DNA (ssDNA), and may thereby play a role in sensing DNA damage and promoting cell survival. Positively regulates cap-dependent translation and as a result cell proliferation, via recruitment of EIF4A1 to the initiation complex and promotion of EIF4A1 ATPase activity. Regulates the mRNA stability and protein abundance of desmosome components PKP2, PKP3, DSC2 and DSP, potentially via its interaction with FXR1. This is Plakophilin-1 (PKP1) from Homo sapiens (Human).